An 880-amino-acid polypeptide reads, in one-letter code: Leucine--tRNA ligase (880 aa).

The 'HIGH' region signature appears at 46–56 (PYPSGALHMGH). The short motif at 638-642 (KMSKS) is the 'KMSKS' region element. Lysine 641 contacts ATP.

It belongs to the class-I aminoacyl-tRNA synthetase family.

The protein resides in the cytoplasm. The catalysed reaction is tRNA(Leu) + L-leucine + ATP = L-leucyl-tRNA(Leu) + AMP + diphosphate. This Xanthomonas axonopodis pv. citri (strain 306) protein is Leucine--tRNA ligase.